The following is a 410-amino-acid chain: Divergent protein kinase domain 1C (410 aa).

The Cytoplasmic segment spans residues 1–19; it reads MARAAGERGRAARCGRWRR. The May mediate ER retention motif lies at 18 to 19; it reads RR. Residues 20–40 form a helical membrane-spanning segment; that stretch reads GALLAFAAWTAGWVLAAALLL. Residues 41-410 are Lumenal-facing; it reads RAHPSVLSER…TLKELQEAEK (370 aa).

Belongs to the DIPK family. In terms of processing, among the many cysteines in the lumenal domain, most are probably involved in disulfide bonds. As to expression, mainly expressed in the brain and eye, some expression in kidney and skeletal muscle.

It localises to the endoplasmic reticulum membrane. This is Divergent protein kinase domain 1C (Dipk1c) from Mus musculus (Mouse).